Reading from the N-terminus, the 155-residue chain is Small ribosomal subunit protein uS7cz/uS7cy (155 aa).

Belongs to the universal ribosomal protein uS7 family. Part of the 30S ribosomal subunit.

The protein resides in the plastid. It is found in the chloroplast. One of the primary rRNA binding proteins, it binds directly to 16S rRNA where it nucleates assembly of the head domain of the 30S subunit. This Daucus carota (Wild carrot) protein is Small ribosomal subunit protein uS7cz/uS7cy (rps7-A).